A 313-amino-acid chain; its full sequence is DNA-directed RNA polymerase subunit alpha (313 aa).

Residues 1–227 (MMLDVAPPRF…DFFGLFAEGY (227 aa)) are alpha N-terminal domain (alpha-NTD). The tract at residues 242–313 (RPVITDERPI…YGYTLESGRE (72 aa)) is alpha C-terminal domain (alpha-CTD).

Belongs to the RNA polymerase alpha chain family. As to quaternary structure, homodimer. The RNAP catalytic core consists of 2 alpha, 1 beta, 1 beta' and 1 omega subunit. When a sigma factor is associated with the core the holoenzyme is formed, which can initiate transcription.

It carries out the reaction RNA(n) + a ribonucleoside 5'-triphosphate = RNA(n+1) + diphosphate. DNA-dependent RNA polymerase catalyzes the transcription of DNA into RNA using the four ribonucleoside triphosphates as substrates. The polypeptide is DNA-directed RNA polymerase subunit alpha (Rubrobacter xylanophilus (strain DSM 9941 / JCM 11954 / NBRC 16129 / PRD-1)).